A 312-amino-acid chain; its full sequence is Tyrosine recombinase XerC (312 aa).

The Core-binding (CB) domain occupies 10–101 (PDLQAARESW…GIRSLLRFLE (92 aa)). Residues 122 to 306 (SLPKPLTASD…DTARLLEIYE (185 aa)) form the Tyr recombinase domain. Active-site residues include Arg165, Lys190, His258, Arg261, and His284. The O-(3'-phospho-DNA)-tyrosine intermediate role is filled by Tyr293.

It belongs to the 'phage' integrase family. XerC subfamily. In terms of assembly, forms a cyclic heterotetrameric complex composed of two molecules of XerC and two molecules of XerD.

It localises to the cytoplasm. Site-specific tyrosine recombinase, which acts by catalyzing the cutting and rejoining of the recombining DNA molecules. The XerC-XerD complex is essential to convert dimers of the bacterial chromosome into monomers to permit their segregation at cell division. It also contributes to the segregational stability of plasmids. This is Tyrosine recombinase XerC from Mesorhizobium japonicum (strain LMG 29417 / CECT 9101 / MAFF 303099) (Mesorhizobium loti (strain MAFF 303099)).